A 185-amino-acid chain; its full sequence is Elongation factor P (185 aa).

Belongs to the elongation factor P family.

It localises to the cytoplasm. The protein operates within protein biosynthesis; polypeptide chain elongation. Involved in peptide bond synthesis. Stimulates efficient translation and peptide-bond synthesis on native or reconstituted 70S ribosomes in vitro. Probably functions indirectly by altering the affinity of the ribosome for aminoacyl-tRNA, thus increasing their reactivity as acceptors for peptidyl transferase. The polypeptide is Elongation factor P (Lysinibacillus sphaericus (strain C3-41)).